A 282-amino-acid polypeptide reads, in one-letter code: NADPH-dependent 7-cyano-7-deazaguanine reductase (282 aa).

90–92 (IES) provides a ligand contact to substrate. 92–93 (SK) contacts NADPH. The Thioimide intermediate role is filled by Cys190. Asp197 (proton donor) is an active-site residue. 229-230 (HE) lines the substrate pocket. Residue 258–259 (RG) coordinates NADPH.

The protein belongs to the GTP cyclohydrolase I family. QueF type 2 subfamily. In terms of assembly, homodimer.

It localises to the cytoplasm. The enzyme catalyses 7-aminomethyl-7-carbaguanine + 2 NADP(+) = 7-cyano-7-deazaguanine + 2 NADPH + 3 H(+). Its pathway is tRNA modification; tRNA-queuosine biosynthesis. Its function is as follows. Catalyzes the NADPH-dependent reduction of 7-cyano-7-deazaguanine (preQ0) to 7-aminomethyl-7-deazaguanine (preQ1). In Aeromonas salmonicida (strain A449), this protein is NADPH-dependent 7-cyano-7-deazaguanine reductase.